Reading from the N-terminus, the 253-residue chain is MTTIDLNCNLGESFGAYKMGNDDEILPFVSSINVACGFHAGDPSVMRQTVEKAMQHNVAIGAHPGFPDLIGFGRRNMNVSANEVYDYVLYQIGALDAFVKAAGGKMQHVKPHGALYNMAATNPEIADAIAKAIYHMNSSLSLYGLANSEAFIQAAEKYNITLVQEAFADRTYKEDGTLTSRTEENALIKNEDEAIKQVLQMVKEGYVNSVNGEKVAVQAQTICLHGDGEKAVQFARKIYRTFEHNKISICAPK.

This sequence belongs to the LamB/PxpA family. As to quaternary structure, forms a complex composed of PxpA, PxpB and PxpC.

It catalyses the reaction 5-oxo-L-proline + ATP + 2 H2O = L-glutamate + ADP + phosphate + H(+). Its function is as follows. Catalyzes the cleavage of 5-oxoproline to form L-glutamate coupled to the hydrolysis of ATP to ADP and inorganic phosphate. This chain is 5-oxoprolinase subunit A, found in Bacillus anthracis (strain A0248).